Consider the following 470-residue polypeptide: Cannabinoid receptor type 1B (470 aa).

Residues 1–113 (MKLALHRIAG…CFMILTPAQQ (113 aa)) are Extracellular-facing. N78 and N86 each carry an N-linked (GlcNAc...) asparagine glycan. The chain crosses the membrane as a helical span at residues 114–139 (LVIVILAITLGTFTVLENFVVLCVIL). At 140–151 (HSHTLRSRPSYH) the chain is on the cytoplasmic side. A helical transmembrane segment spans residues 152-172 (FIGSLAVADLIGSIIFVYSFL). Residues 173–184 (DFHVLHRKDSPS) are Extracellular-facing. A helical transmembrane segment spans residues 185 to 209 (IFLFKLAGVIASFTASVGSLFLTAI). The Cytoplasmic portion of the chain corresponds to 210–229 (DRYVSIHRPMAYKRIITKTK). Residues 230 to 252 (AVIAFSVMWAISIEFSLLPLLGW) traverse the membrane as a helical segment. Topologically, residues 253–270 (NCKRLHSVCSDIFPLIDE) are extracellular. The chain crosses the membrane as a helical span at residues 271 to 296 (KYLMFWIGMTTVLLLFIIYAYMFILW). Over 297-341 (KSHHHAVRMLSRSSQRSIIVYTSEGTKVQTVRPEQARMDLRLAKT) the chain is Cytoplasmic. A helical transmembrane segment spans residues 342 to 362 (LVLILVALIICWGPLLAIMVY). Residues 363 to 374 (DLFGRVNDFIKT) are Extracellular-facing. A helical transmembrane segment spans residues 375–396 (VFAFCSMLCLLNSTINPVIYAM). The Cytoplasmic segment spans residues 397 to 470 (RSKDLRRAFV…VTASSPAEAV (74 aa)). The S-palmitoyl cysteine moiety is linked to residue C412. Residues 418–434 (SLDSSAESDWNSRSVRS) are compositionally biased toward polar residues. The interval 418-450 (SLDSSAESDWNSRSVRSTGGRAGKDRSVGGKPQ) is disordered.

This sequence belongs to the G-protein coupled receptor 1 family. Palmitoylation at Cys-412 is important for recruitment at both plasma membrane and lipid rafts and association with G protein alpha subunits.

It is found in the cell membrane. Its subcellular location is the mitochondrion outer membrane. The protein localises to the cell projection. The protein resides in the axon. It localises to the presynapse. G-protein coupled receptor for cannabinoids. Mediates many cannabinoid-induced effects in the central nervous system (CNS), as well as in peripheral tissues. Regulates cellular respiration and energy production in response to cannabinoids. Signaling typically involves reduction in cyclic AMP. The protein is Cannabinoid receptor type 1B (cnr1b) of Takifugu rubripes (Japanese pufferfish).